The primary structure comprises 343 residues: E3 ubiquitin-protein ligase RNF113A (343 aa).

A2 is modified (N-acetylalanine). The tract at residues 2–60 (AEQLSPGKAVDQVCTFLFKKPGRKGAAGRRKRPACDPEPGESGSSSDEGCTVVRPEKKR) is important for interaction with SNRNP200/BRR2. Residue S6 is modified to Phosphoserine. The segment covering 22–33 (PGRKGAAGRRKR) has biased composition (basic residues). Positions 22 to 96 (PGRKGAAGRR…EEEENEPESL (75 aa)) are disordered. Residues 41-50 (GESGSSSDEG) are compositionally biased toward low complexity. The tract at residues 50-61 (GCTVVRPEKKRV) is important for interaction with CXCR4. A phosphoserine mark is found at S84 and S85. Over residues 84–93 (SSEEEEENEP) the composition is skewed to acidic residues. The C3H1-type zinc finger occupies 196–224 (DYQPDICKDYKETGFCGFGDSCKFLHDRS). At S253 the chain carries Phosphoserine. An RING-type zinc finger spans residues 262–300 (CFICRQSFQNPVVTKCRHYFCESCALQHFRTTPRCYVCD). Residues 322-343 (ATGEGGASDLPEDPDEDAIPIT) form a disordered region. The segment covering 331–343 (LPEDPDEDAIPIT) has biased composition (acidic residues).

Component of pre-catalytic and catalytic spliceosome complexes. Interacts (via N-terminus) with the spliceosome subunit SNRNP200/BRR2. Component of the minor spliceosome, which splices U12-type introns. Within this complex, interacts with SCNM1 and CRIPT. As to expression, ubiquitous.

The protein localises to the nucleus. It localises to the nucleus speckle. It catalyses the reaction S-ubiquitinyl-[E2 ubiquitin-conjugating enzyme]-L-cysteine + [acceptor protein]-L-lysine = [E2 ubiquitin-conjugating enzyme]-L-cysteine + N(6)-ubiquitinyl-[acceptor protein]-L-lysine.. The protein operates within protein modification; protein ubiquitination. Required for pre-mRNA splicing as component of the spliceosome. As a component of the minor spliceosome, involved in the splicing of U12-type introns in pre-mRNAs. E3 ubiquitin-protein ligase that catalyzes the transfer of ubiquitin onto target proteins. Catalyzes polyubiquitination of SNRNP200/BRR2 with non-canonical 'Lys-63'-linked polyubiquitin chains. Plays a role in DNA repair via its role in the synthesis of 'Lys-63'-linked polyubiquitin chains that recruit ALKBH3 and the ASCC complex to sites of DNA damage by alkylating agents. Ubiquitinates CXCR4, leading to its degradation, and thereby contributes to the termination of CXCR4 signaling. This chain is E3 ubiquitin-protein ligase RNF113A (RNF113A), found in Homo sapiens (Human).